A 172-amino-acid chain; its full sequence is Large ribosomal subunit protein uL11m (172 aa).

Belongs to the universal ribosomal protein uL11 family.

Its subcellular location is the mitochondrion. This is Large ribosomal subunit protein uL11m (mrpl11) from Dictyostelium discoideum (Social amoeba).